A 442-amino-acid polypeptide reads, in one-letter code: Na(+)/H(+) antiporter NhaA (442 aa).

11 helical membrane passes run 32–52 (IGGG…NSPW), 73–93 (LTLA…VAGL), 111–131 (AVPV…YALV), 139–159 (AGWA…LAVI), 170–190 (FLLT…AVVY), 193–213 (HLSI…TLLV), 234–254 (VHAS…AVPV), 284–304 (VAVP…LSGL), 316–336 (VVLG…FLVA), 352–372 (VLGL…IGEL), and 383–403 (HVKI…AVVL). A compositionally biased stretch (basic and acidic residues) spans 423–435 (HDGIPDVYQDLHR). The disordered stretch occupies residues 423–442 (HDGIPDVYQDLHRSSPRPWG).

The protein belongs to the NhaA Na(+)/H(+) (TC 2.A.33) antiporter family.

The protein resides in the cell membrane. It catalyses the reaction Na(+)(in) + 2 H(+)(out) = Na(+)(out) + 2 H(+)(in). Na(+)/H(+) antiporter that extrudes sodium in exchange for external protons. The sequence is that of Na(+)/H(+) antiporter NhaA from Frankia casuarinae (strain DSM 45818 / CECT 9043 / HFP020203 / CcI3).